Here is a 359-residue protein sequence, read N- to C-terminus: 3-dehydroquinate synthase (359 aa).

Residues Asp-70–Lys-75, Gly-105–Asp-109, Thr-129–Thr-130, Lys-142, Lys-151, and Phe-169–Thr-172 contribute to the NAD(+) site. Positions 184, 247, and 264 each coordinate Zn(2+).

Belongs to the sugar phosphate cyclases superfamily. Dehydroquinate synthase family. Requires Co(2+) as cofactor. It depends on Zn(2+) as a cofactor. NAD(+) serves as cofactor.

It localises to the cytoplasm. The catalysed reaction is 7-phospho-2-dehydro-3-deoxy-D-arabino-heptonate = 3-dehydroquinate + phosphate. It functions in the pathway metabolic intermediate biosynthesis; chorismate biosynthesis; chorismate from D-erythrose 4-phosphate and phosphoenolpyruvate: step 2/7. Catalyzes the conversion of 3-deoxy-D-arabino-heptulosonate 7-phosphate (DAHP) to dehydroquinate (DHQ). This Francisella tularensis subsp. tularensis (strain FSC 198) protein is 3-dehydroquinate synthase.